A 159-amino-acid polypeptide reads, in one-letter code: Large ribosomal subunit protein uL11 (159 aa).

Residues 137 to 149 show a composition bias toward basic and acidic residues; sequence EGKDPREVQREVD. Residues 137-159 form a disordered region; the sequence is EGKDPREVQREVDSGAWDKLLGG.

This sequence belongs to the universal ribosomal protein uL11 family. As to quaternary structure, part of the ribosomal stalk of the 50S ribosomal subunit. Interacts with L10 and the large rRNA to form the base of the stalk. L10 forms an elongated spine to which L12 dimers bind in a sequential fashion forming a multimeric L10(L12)X complex.

Functionally, forms part of the ribosomal stalk which helps the ribosome interact with GTP-bound translation factors. This is Large ribosomal subunit protein uL11 from Korarchaeum cryptofilum (strain OPF8).